The primary structure comprises 511 residues: Inositol-3-phosphate synthase isozyme 1 (511 aa).

NAD(+) contacts are provided by Gly-71, Gly-72, Asn-73, Asn-74, Asp-144, Ile-181, Gln-191, Arg-194, Thr-231, Ala-232, Asn-233, Thr-234, Gly-282, Ser-283, Asp-307, Ser-310, Asn-341, Asn-342, Asp-343, Lys-356, Ala-394, Asp-395, Asp-423, and Ser-424.

Belongs to the myo-inositol 1-phosphate synthase family. Homotrimer or homotetramer. Interacts with ATXR5 and ATXR6. NAD(+) is required as a cofactor. In terms of tissue distribution, expressed in siliques, leaves, roots, seed endosperm, but not in embryos. Highest expression in leaves, but restricted to vascular tissue in older leaves.

The protein resides in the cytoplasm. It is found in the cytosol. The protein localises to the nucleus. It catalyses the reaction D-glucose 6-phosphate = 1D-myo-inositol 3-phosphate. It functions in the pathway polyol metabolism; myo-inositol biosynthesis; myo-inositol from D-glucose 6-phosphate: step 1/2. Key enzyme in myo-inositol biosynthesis pathway that catalyzes the conversion of glucose 6-phosphate to 1-myo-inositol 1-phosphate in a NAD-dependent manner. Catalyzes the majority of myo-inositol synthesis required for plant growth and development. Acts as a repressor of programmed cell death and protects plant cells against cell death under high light intensity or long days. Controls its own transcription by inhibiting ATXR6 activity. Reduces the deposition of inhibitory histone marks on its own promoter. The sequence is that of Inositol-3-phosphate synthase isozyme 1 (IPS1) from Arabidopsis thaliana (Mouse-ear cress).